The chain runs to 275 residues: Putative phosphoenolpyruvate synthase regulatory protein (275 aa).

Position 157–164 (157–164 (GVSRCGKT)) interacts with ADP.

This sequence belongs to the pyruvate, phosphate/water dikinase regulatory protein family. PSRP subfamily.

The catalysed reaction is [pyruvate, water dikinase] + ADP = [pyruvate, water dikinase]-phosphate + AMP + H(+). The enzyme catalyses [pyruvate, water dikinase]-phosphate + phosphate + H(+) = [pyruvate, water dikinase] + diphosphate. In terms of biological role, bifunctional serine/threonine kinase and phosphorylase involved in the regulation of the phosphoenolpyruvate synthase (PEPS) by catalyzing its phosphorylation/dephosphorylation. The protein is Putative phosphoenolpyruvate synthase regulatory protein of Bordetella bronchiseptica (strain ATCC BAA-588 / NCTC 13252 / RB50) (Alcaligenes bronchisepticus).